The chain runs to 48 residues: Delta-stichotoxin-She1a (48 aa).

Intrachain disulfides connect C3-C43, C5-C33, and C26-C44.

This sequence belongs to the sea anemone sodium channel inhibitory toxin family. Type II subfamily.

The protein localises to the secreted. The protein resides in the nematocyst. Functionally, binds specifically to voltage-gated sodium channels (Nav), thereby delaying their inactivation during signal transduction. Is highly toxic to crabs (by intrahemocoelic injection), but without effect upon mice (by intraperitoneal injection). The chain is Delta-stichotoxin-She1a from Stichodactyla helianthus (Sun anemone).